Reading from the N-terminus, the 202-residue chain is MERGAGAKLLPLLLLLRATGFTCAQTDGRNGYTAVIEVTSGGPWGDWAWPEMCPDGFFASGFSLKVEPPQGIPGDDTALNGIRLHCARGNVLGNTHVVESQSGSWGEWSEPLWCRGGAYLVAFSLRVEAPTTLGDNTAANNVRFRCSDGEELQGPGLSWGDFGDWSDHCPKGACGLQTKIQGPRGLGDDTALNDARLFCCRS.

A signal peptide spans 1–24; sequence MERGAGAKLLPLLLLLRATGFTCA. 4 cysteine pairs are disulfide-bonded: Cys-53–Cys-86, Cys-114–Cys-146, Cys-169–Cys-199, and Cys-174–Cys-200.

The protein belongs to the VMO1 family.

It is found in the secreted. The chain is Vitelline membrane outer layer protein 1 homolog (VMO1) from Homo sapiens (Human).